The primary structure comprises 128 residues: Small ribosomal subunit protein bS6 (128 aa).

The protein belongs to the bacterial ribosomal protein bS6 family.

In terms of biological role, binds together with bS18 to 16S ribosomal RNA. This Leifsonia xyli subsp. xyli (strain CTCB07) protein is Small ribosomal subunit protein bS6.